Consider the following 163-residue polypeptide: Ribonuclease P protein subunit p25-like protein (163 aa).

2 disordered regions span residues 1-22 (MEHY…PQLP) and 129-163 (NECG…DTRS). A compositionally biased stretch (low complexity) spans 143-152 (GSMPSSSCGP). A compositionally biased stretch (basic residues) spans 153-163 (RSRRRARDTRS).

This sequence belongs to the histone-like Alba family.

The protein localises to the nucleus. In terms of biological role, may be a component of ribonuclease P or MRP. The polypeptide is Ribonuclease P protein subunit p25-like protein (RPP25L) (Homo sapiens (Human)).